Reading from the N-terminus, the 474-residue chain is Ankyrin repeat, SAM and basic leucine zipper domain-containing protein 1 (474 aa).

Positions methionine 1 to arginine 31 are disordered. Serine 16, serine 17, and serine 19 each carry phosphoserine. ANK repeat units follow at residues glutamate 43–serine 72, phenylalanine 76–phenylalanine 105, aspartate 108–alanine 142, lysine 146–alanine 175, asparagine 179–leucine 208, and aspartate 212–glycine 241. The SAM domain occupies serine 270–glutamine 333.

In terms of assembly, interacts with DDX4, PIWIL1, RANBP9 and TDRD1.

The protein localises to the cytoplasm. Functionally, plays a central role during spermatogenesis by repressing transposable elements and preventing their mobilization, which is essential for the germline integrity. Acts via the piRNA metabolic process, which mediates the repression of transposable elements during meiosis by forming complexes composed of piRNAs and Piwi proteins and governs the methylation and subsequent repression of transposons. Its association with pi-bodies suggests a participation in the primary piRNAs metabolic process. Required prior to the pachytene stage to facilitate the production of multiple types of piRNAs, including those associated with repeats involved in the regulation of retrotransposons. May act by mediating protein-protein interactions during germ cell maturation. In Ornithorhynchus anatinus (Duckbill platypus), this protein is Ankyrin repeat, SAM and basic leucine zipper domain-containing protein 1 (ASZ1).